The following is a 158-amino-acid chain: SKP1-like protein 18 (158 aa).

An interaction with the F-box domain of F-box proteins region spans residues 99–157; it reads ILAANYLNFEGLLGFASQTVADYIKDKTPEEVREIFNIENDFTPEEEEEIRKENAWTFN.

This sequence belongs to the SKP1 family. As to quaternary structure, part of a SCF (SKP1-cullin-F-box) protein ligase complex. Interacts with CPR1/CPR30, EBF1, SKP2A, At3g61590, At4g38940 and At5g49610. Expressed in young seedlings, roots, leaves, floral stems, inflorescences, pollen, and siliques.

Its subcellular location is the nucleus. Its pathway is protein modification; protein ubiquitination. Its function is as follows. Involved in ubiquitination and subsequent proteasomal degradation of target proteins. Together with CUL1, RBX1 and a F-box protein, it forms a SCF E3 ubiquitin ligase complex. The functional specificity of this complex depends on the type of F-box protein. In the SCF complex, it serves as an adapter that links the F-box protein to CUL1. The chain is SKP1-like protein 18 (ASK18) from Arabidopsis thaliana (Mouse-ear cress).